Consider the following 326-residue polypeptide: F-box/LRR-repeat protein 12 (326 aa).

The region spanning 1–47 is the F-box domain; that stretch reads MATFADLPDSVLLEIFSYLPVRDRIRISRVCHHWKKLVDDRWLWRHV. LRR repeat units follow at residues 51 to 78, 86 to 111, 161 to 185, 186 to 211, 212 to 236, 237 to 261, and 266 to 291; these read LYTM…RMGG, APQL…CLHV, VPAF…VLGG, TYRV…EVLG, CTLS…IRLT, VRGL…CLLG, and PEMP…ELQG.

Interacts with SKP1 and CUL1.

The protein operates within protein modification; protein ubiquitination. In terms of biological role, substrate-recognition component of the SCF (SKP1-CUL1-F-box protein)-type E3 ubiquitin ligase complex. Mediates the polyubiquitination and proteasomal degradation of CAMK1 leading to disruption of cyclin D1/CDK4 complex assembly which results in G1 cell cycle arrest in lung epithelia. This Bos taurus (Bovine) protein is F-box/LRR-repeat protein 12 (FBXL12).